The sequence spans 432 residues: D-amino acid dehydrogenase (432 aa).

Residue V3–W17 coordinates FAD.

It belongs to the DadA oxidoreductase family. Requires FAD as cofactor.

The catalysed reaction is a D-alpha-amino acid + A + H2O = a 2-oxocarboxylate + AH2 + NH4(+). The protein operates within amino-acid degradation; D-alanine degradation; NH(3) and pyruvate from D-alanine: step 1/1. Functionally, oxidative deamination of D-amino acids. The protein is D-amino acid dehydrogenase of Shigella dysenteriae serotype 1 (strain Sd197).